Consider the following 83-residue polypeptide: Weak toxin DE-1 homolog 1 (83 aa).

An N-terminal signal peptide occupies residues 1–21 (MKPVLLTLVVVTIVCLDLGYT). 4 disulfide bridges follow: C24–C45, C38–C62, C64–C75, and C76–C81.

The protein belongs to the three-finger toxin family. Short-chain subfamily. Type I alpha-neurotoxin sub-subfamily. Expressed by the venom gland.

It localises to the secreted. Binds to muscle nicotinic acetylcholine receptor (nAChR) and inhibit acetylcholine from binding to the receptor, thereby impairing neuromuscular transmission. In Ophiophagus hannah (King cobra), this protein is Weak toxin DE-1 homolog 1.